We begin with the raw amino-acid sequence, 276 residues long: Large ribosomal subunit protein uL2 (276 aa).

Disordered regions lie at residues Met-1–Arg-60 and Asn-226–Gln-276. Basic and acidic residues predominate over residues Ser-20–Lys-31. 2 stretches are compositionally biased toward basic residues: residues Ser-50–Arg-60 and Lys-258–Gln-276.

The protein belongs to the universal ribosomal protein uL2 family. Part of the 50S ribosomal subunit. Forms a bridge to the 30S subunit in the 70S ribosome.

One of the primary rRNA binding proteins. Required for association of the 30S and 50S subunits to form the 70S ribosome, for tRNA binding and peptide bond formation. It has been suggested to have peptidyltransferase activity; this is somewhat controversial. Makes several contacts with the 16S rRNA in the 70S ribosome. This Natranaerobius thermophilus (strain ATCC BAA-1301 / DSM 18059 / JW/NM-WN-LF) protein is Large ribosomal subunit protein uL2.